Here is a 364-residue protein sequence, read N- to C-terminus: Uroporphyrinogen decarboxylase (364 aa).

The coproporphyrinogen I site is built by Arg34, Ala36, Arg38, Arg47, Asp83, Tyr161, Ser216, and His336. Arg34, Ala36, and Arg38 together coordinate coproporphyrinogen III. 4 residues coordinate coproporphyrinogen III: Asp83, Tyr161, Ser216, and His336.

Belongs to the uroporphyrinogen decarboxylase family. As to quaternary structure, homodimer.

It is found in the cytoplasm. Its subcellular location is the cytosol. The enzyme catalyses uroporphyrinogen III + 4 H(+) = coproporphyrinogen III + 4 CO2. It carries out the reaction uroporphyrinogen I + 4 H(+) = coproporphyrinogen I + 4 CO2. Its pathway is porphyrin-containing compound metabolism; protoporphyrin-IX biosynthesis; coproporphyrinogen-III from 5-aminolevulinate: step 4/4. Its function is as follows. Catalyzes the sequential decarboxylation of the four acetate side chains of uroporphyrinogen to form coproporphyrinogen and participates in the fifth step in the heme biosynthetic pathway. Isomer I or isomer III of uroporphyrinogen may serve as substrate, but only coproporphyrinogen III can ultimately be converted to heme. In vitro also decarboxylates pentacarboxylate porphyrinogen I. The polypeptide is Uroporphyrinogen decarboxylase (Rattus norvegicus (Rat)).